Consider the following 670-residue polypeptide: DNA ligase (670 aa).

NAD(+)-binding positions include 32-36, 81-82, and glutamate 114; these read DSEYD and SL. Catalysis depends on lysine 116, which acts as the N6-AMP-lysine intermediate. Residues arginine 137, glutamate 174, lysine 291, and lysine 315 each coordinate NAD(+). Cysteine 409, cysteine 412, cysteine 427, and cysteine 433 together coordinate Zn(2+). The BRCT domain occupies 592 to 670; it reads ASENLFKDKT…EEEFLAQITR (79 aa).

The protein belongs to the NAD-dependent DNA ligase family. LigA subfamily. The cofactor is Mg(2+). Mn(2+) is required as a cofactor.

The catalysed reaction is NAD(+) + (deoxyribonucleotide)n-3'-hydroxyl + 5'-phospho-(deoxyribonucleotide)m = (deoxyribonucleotide)n+m + AMP + beta-nicotinamide D-nucleotide.. Functionally, DNA ligase that catalyzes the formation of phosphodiester linkages between 5'-phosphoryl and 3'-hydroxyl groups in double-stranded DNA using NAD as a coenzyme and as the energy source for the reaction. It is essential for DNA replication and repair of damaged DNA. The protein is DNA ligase of Haemophilus influenzae (strain ATCC 51907 / DSM 11121 / KW20 / Rd).